The following is a 475-amino-acid chain: Glutamate--tRNA ligase 2 (475 aa).

The short motif at 9-19 is the 'HIGH' region element; sequence PSPTGFLHIGS. Residues 238 to 242 carry the 'KMSKS' region motif; that stretch reads KLSKR. Residue Lys241 participates in ATP binding.

Belongs to the class-I aminoacyl-tRNA synthetase family. Glutamate--tRNA ligase type 1 subfamily. As to quaternary structure, monomer.

It is found in the cytoplasm. The enzyme catalyses tRNA(Glu) + L-glutamate + ATP = L-glutamyl-tRNA(Glu) + AMP + diphosphate. Functionally, catalyzes the attachment of glutamate to tRNA(Glu) in a two-step reaction: glutamate is first activated by ATP to form Glu-AMP and then transferred to the acceptor end of tRNA(Glu). The chain is Glutamate--tRNA ligase 2 from Bartonella quintana (strain Toulouse) (Rochalimaea quintana).